The primary structure comprises 111 residues: Protein RnfH (111 aa).

Residues 88-111 (RRRRVQKTRESGTREGQKWLRGGA) form a disordered region. Residues 94–105 (KTRESGTREGQK) are compositionally biased toward basic and acidic residues.

The protein belongs to the UPF0125 (RnfH) family.

This is Protein RnfH from Cupriavidus pinatubonensis (strain JMP 134 / LMG 1197) (Cupriavidus necator (strain JMP 134)).